The sequence spans 340 residues: Homeobox protein DBX2 (340 aa).

The homeobox DNA-binding region spans 185-244 (GILRRAVFSEDQRKALEKMFQKQKYISKTDRKKLAINLGLKESQVKIWFQNRRMKWRNSK). The segment at 283-313 (QQHPSPGWRENSPEPSERLIQGSPGAEALPP) is disordered.

The protein belongs to the H2.0 homeobox family.

The protein localises to the nucleus. The chain is Homeobox protein DBX2 (DBX2) from Bos taurus (Bovine).